We begin with the raw amino-acid sequence, 476 residues long: Cardiolipin synthase (476 aa).

Helical transmembrane passes span 2–22 and 31–51; these read HLFI…IIFI and WAWI…YILF. 2 consecutive PLD phosphodiesterase domains span residues 207 to 234 and 389 to 416; these read INYR…GDEY and EKGF…DIRS. Active-site residues include H212, K214, D219, H394, K396, and D401.

This sequence belongs to the phospholipase D family. Cardiolipin synthase subfamily.

The protein resides in the cell membrane. It catalyses the reaction 2 a 1,2-diacyl-sn-glycero-3-phospho-(1'-sn-glycerol) = a cardiolipin + glycerol. In terms of biological role, catalyzes the reversible phosphatidyl group transfer from one phosphatidylglycerol molecule to another to form cardiolipin (CL) (diphosphatidylglycerol) and glycerol. This Clostridium perfringens (strain 13 / Type A) protein is Cardiolipin synthase (cls).